Reading from the N-terminus, the 93-residue chain is Small ribosomal subunit protein uS19 (93 aa).

This sequence belongs to the universal ribosomal protein uS19 family.

Its function is as follows. Protein S19 forms a complex with S13 that binds strongly to the 16S ribosomal RNA. The sequence is that of Small ribosomal subunit protein uS19 from Clostridium perfringens (strain ATCC 13124 / DSM 756 / JCM 1290 / NCIMB 6125 / NCTC 8237 / Type A).